Consider the following 391-residue polypeptide: Homocitrate synthase AksA (391 aa).

The 252-residue stretch at 20 to 271 (ITIYDTTLRD…DLGFNIGVLY (252 aa)) folds into the Pyruvate carboxyltransferase domain.

Belongs to the alpha-IPM synthase/homocitrate synthase family.

It carries out the reaction acetyl-CoA + 2-oxoglutarate + H2O = (2R)-homocitrate + CoA + H(+). The enzyme catalyses 2-oxoadipate + acetyl-CoA + H2O = (R)-dihomocitrate + CoA + H(+). The catalysed reaction is 2-oxoheptanedioate + acetyl-CoA + H2O = (R)-trihomocitrate + CoA + H(+). The protein operates within organic acid metabolism; 2-oxosuberate biosynthesis. Functionally, catalyzes the condensation of alpha-ketoglutarate and acetyl-CoA to form (R)-homocitrate. Can also catalyze the condensation of alpha-ketoadipate with acetyl-CoA to form (R)-homo(2)citrate, and the condensation of alpha-ketopimelate with acetyl-CoA to form (R)-homo(3)citrate. These reactions are part of the biosynthesis pathway of coenzyme B and biotin. This chain is Homocitrate synthase AksA (aksA), found in Methanothermobacter thermautotrophicus (strain ATCC 29096 / DSM 1053 / JCM 10044 / NBRC 100330 / Delta H) (Methanobacterium thermoautotrophicum).